Here is a 161-residue protein sequence, read N- to C-terminus: Nucleotide-binding protein Gmet_3206 (161 aa).

It belongs to the YajQ family.

Nucleotide-binding protein. The sequence is that of Nucleotide-binding protein Gmet_3206 from Geobacter metallireducens (strain ATCC 53774 / DSM 7210 / GS-15).